Here is a 149-residue protein sequence, read N- to C-terminus: Endoribonuclease YbeY (149 aa).

Residues His113, His117, and His123 each contribute to the Zn(2+) site.

This sequence belongs to the endoribonuclease YbeY family. Requires Zn(2+) as cofactor.

The protein localises to the cytoplasm. Single strand-specific metallo-endoribonuclease involved in late-stage 70S ribosome quality control and in maturation of the 3' terminus of the 16S rRNA. The protein is Endoribonuclease YbeY of Saccharophagus degradans (strain 2-40 / ATCC 43961 / DSM 17024).